Consider the following 77-residue polypeptide: UPF0291 protein BLi02035/BL02933 (77 aa).

The tract at residues Pro-57–His-77 is disordered.

The protein belongs to the UPF0291 family.

The protein resides in the cytoplasm. The protein is UPF0291 protein BLi02035/BL02933 of Bacillus licheniformis (strain ATCC 14580 / DSM 13 / JCM 2505 / CCUG 7422 / NBRC 12200 / NCIMB 9375 / NCTC 10341 / NRRL NRS-1264 / Gibson 46).